A 230-amino-acid chain; its full sequence is Prepilin leader peptidase/N-methyltransferase (230 aa).

Helical transmembrane passes span 1-21 (MIYF…WFYL), 60-80 (GHIL…QIAF), 84-104 (IFTV…YLDW), 114-134 (CLWL…LLTL), 140-160 (SAAS…FYYG), 181-201 (LETL…FSLI), and 208-228 (FLPF…VKYY).

It belongs to the peptidase A24 family.

It is found in the cell inner membrane. The catalysed reaction is Typically cleaves a -Gly-|-Phe- bond to release an N-terminal, basic peptide of 5-8 residues from type IV prepilin, and then N-methylates the new N-terminal amino group, the methyl donor being S-adenosyl-L-methionine.. In terms of biological role, plays a role in type II pseudopili formation by proteolytically removing the leader sequence from substrate proteins and subsequently monomethylating the alpha-amino group of the newly exposed N-terminal phenylalanine. Substrates include proteins required for biogenesis of the type II general secretory apparatus. The sequence is that of Prepilin leader peptidase/N-methyltransferase (hofD) from Haemophilus influenzae (strain ATCC 51907 / DSM 11121 / KW20 / Rd).